Reading from the N-terminus, the 501-residue chain is ATP synthase subunit alpha (501 aa).

169-176 is an ATP binding site; it reads GDRQTGKT.

Belongs to the ATPase alpha/beta chains family. In terms of assembly, F-type ATPases have 2 components, CF(1) - the catalytic core - and CF(0) - the membrane proton channel. CF(1) has five subunits: alpha(3), beta(3), gamma(1), delta(1), epsilon(1). CF(0) has three main subunits: a(1), b(2) and c(9-12). The alpha and beta chains form an alternating ring which encloses part of the gamma chain. CF(1) is attached to CF(0) by a central stalk formed by the gamma and epsilon chains, while a peripheral stalk is formed by the delta and b chains.

The protein localises to the cell membrane. The enzyme catalyses ATP + H2O + 4 H(+)(in) = ADP + phosphate + 5 H(+)(out). Produces ATP from ADP in the presence of a proton gradient across the membrane. The alpha chain is a regulatory subunit. The chain is ATP synthase subunit alpha from Streptococcus pneumoniae serotype 19F (strain G54).